The primary structure comprises 388 residues: Pepsin A (388 aa).

The signal sequence occupies residues 1–15 (MKWLLLLGLVALSEC). Residues 16–62 (IIYKVPLVRKKSLRRNLSEHGLLKDFLKKHNRNPASKYFPQTEAPTL) constitute a propeptide, activation peptide. In terms of domain architecture, Peptidase A1 spans 76–385 (YFGTIGIGTP…DRANNQVGLA (310 aa)). The active site involves D94. The cysteines at positions 107 and 112 are disulfide-linked. Residue S130 is modified to Phosphoserine. C268 and C272 form a disulfide bridge. Residue D277 is part of the active site. C311 and C344 are disulfide-bonded.

The protein belongs to the peptidase A1 family.

It localises to the secreted. The enzyme catalyses Preferential cleavage: hydrophobic, preferably aromatic, residues in P1 and P1' positions. Cleaves 1-Phe-|-Val-2, 4-Gln-|-His-5, 13-Glu-|-Ala-14, 14-Ala-|-Leu-15, 15-Leu-|-Tyr-16, 16-Tyr-|-Leu-17, 23-Gly-|-Phe-24, 24-Phe-|-Phe-25 and 25-Phe-|-Tyr-26 bonds in the B chain of insulin.. In terms of biological role, shows particularly broad specificity; although bonds involving phenylalanine and leucine are preferred, many others are also cleaved to some extent. This is Pepsin A (PGA) from Macaca mulatta (Rhesus macaque).